We begin with the raw amino-acid sequence, 25 residues long: Granule-bound starch synthase 1, chloroplastic/amyloplastic (25 aa).

K16 provides a ligand contact to ADP-alpha-D-glucose.

This sequence belongs to the glycosyltransferase 1 family. Bacterial/plant glycogen synthase subfamily. As to expression, expressed in endosperm.

It is found in the plastid. The protein resides in the chloroplast. The protein localises to the amyloplast. The catalysed reaction is an NDP-alpha-D-glucose + [(1-&gt;4)-alpha-D-glucosyl](n) = [(1-&gt;4)-alpha-D-glucosyl](n+1) + a ribonucleoside 5'-diphosphate + H(+). It functions in the pathway glycan biosynthesis; starch biosynthesis. Functionally, required for the synthesis of amylose in endosperm. The chain is Granule-bound starch synthase 1, chloroplastic/amyloplastic from Fagopyrum esculentum (Common buckwheat).